The following is a 179-amino-acid chain: MAETATIARPYAEALFRVASEAGNLGAWSELVSEMGQIAANPDIKALADDPNVPGDKLGDLFLSVVKSPVNDEARRFVKLLVENNRLTVMPEVAEQFHALKNAREGSSDVEITSAFPLDGQPLNDLVAALERKFGRKLYAKVAVDPSLIGGVSVKVGDEVLDTSVRARLAAMQTALTAV.

This sequence belongs to the ATPase delta chain family. F-type ATPases have 2 components, F(1) - the catalytic core - and F(0) - the membrane proton channel. F(1) has five subunits: alpha(3), beta(3), gamma(1), delta(1), epsilon(1). F(0) has three main subunits: a(1), b(2) and c(10-14). The alpha and beta chains form an alternating ring which encloses part of the gamma chain. F(1) is attached to F(0) by a central stalk formed by the gamma and epsilon chains, while a peripheral stalk is formed by the delta and b chains.

It is found in the cell inner membrane. Its function is as follows. F(1)F(0) ATP synthase produces ATP from ADP in the presence of a proton or sodium gradient. F-type ATPases consist of two structural domains, F(1) containing the extramembraneous catalytic core and F(0) containing the membrane proton channel, linked together by a central stalk and a peripheral stalk. During catalysis, ATP synthesis in the catalytic domain of F(1) is coupled via a rotary mechanism of the central stalk subunits to proton translocation. This protein is part of the stalk that links CF(0) to CF(1). It either transmits conformational changes from CF(0) to CF(1) or is implicated in proton conduction. This chain is ATP synthase subunit delta, found in Cupriavidus pinatubonensis (strain JMP 134 / LMG 1197) (Cupriavidus necator (strain JMP 134)).